We begin with the raw amino-acid sequence, 577 residues long: Multidrug transporter TPO1_2 (577 aa).

The interval 1–63 (MSSTSSDRPY…ALSKNSTQTS (63 aa)) is disordered. Residues Asn-44 and Asn-58 are each glycosylated (N-linked (GlcNAc...) asparagine). Helical transmembrane passes span 137–157 (VMLC…SSIF), 167–187 (IYHV…LGFA), 204–224 (GVLV…ATAK), 234–254 (FFAG…FADM), 263–283 (AICL…VIGS), 293–313 (WLEY…LFFF), 368–388 (PLLL…YLLL), 406–426 (ELPY…IWWM), 446–466 (LLPM…FCWT), 475–495 (WIVP…IFLP), 504–526 (YLLI…GAAF), and 541–561 (YAGL…LLFL).

The protein belongs to the major facilitator superfamily. DHA1 family. Polyamines/proton antiporter (TC 2.A.1.2.16) subfamily.

It is found in the cell membrane. Its function is as follows. Multidrug resistance transporter involved in resistance to azole antifungal drugs such as the imidazoles miconazole, ketoconazole, and tioconazole; as well as the triazoles itraconazole and fluconazole. Also plays a role in the resistance to other antifungal drug families such as the polyene amphotericin B, the pyrimide analog flucytosine, the fungicide mancozeb, and the polyamine spermine. Decreases the intracellular accumulation of clotrimazole by mediating its extrusion from cells. Plays a role in biofilm formation. The sequence is that of Multidrug transporter TPO1_2 from Candida glabrata (strain ATCC 2001 / BCRC 20586 / JCM 3761 / NBRC 0622 / NRRL Y-65 / CBS 138) (Yeast).